The chain runs to 1086 residues: Calcium-transporting ATPase 9, plasma membrane-type (1086 aa).

Low complexity predominate over residues 1 to 15 (MSTSSSNGLLLTSMS). The disordered stretch occupies residues 1–50 (MSTSSSNGLLLTSMSGRHDDMEAGSAKTEEHSDHEELQHDPDDPFDIDNT). Residues 1 to 194 (MSTSSSNGLL…NTYPKKKGKN (194 aa)) lie on the Cytoplasmic side of the membrane. The span at 16-42 (GRHDDMEAGSAKTEEHSDHEELQHDPD) shows a compositional bias: basic and acidic residues. The tract at residues 57-68 (SLRRWRQAALVL) is interaction with calmodulin. A helical transmembrane segment spans residues 195-215 (FFMFLWEAWQDLTLIILIIAA). Residues 216 to 233 (VTSLALGIKTEGLKEGWL) are Lumenal-facing. Residues 234 to 254 (DGGSIAFAVLLVIVVTAVSDY) traverse the membrane as a helical segment. The Cytoplasmic portion of the chain corresponds to 255–382 (RQSLQFQNLN…GEETPLQVRL (128 aa)). A helical membrane pass occupies residues 383–402 (NGLATFIGIVGLSVALVVLV). The Lumenal portion of the chain corresponds to 403–439 (ALLVRYFTGTTQDTNGATQFIKGTTSISDIVDDCVKI). The chain crosses the membrane as a helical span at residues 440–457 (FTIAVTIVVVAVPEGLPL). At 458–857 (AVTLTLAYSM…RWGRSVYANI (400 aa)) the chain is on the cytoplasmic side. The 4-aspartylphosphate intermediate role is filled by Asp-495. Asp-802 and Asp-806 together coordinate Mg(2+). The helical transmembrane segment at 858-876 (QKFIQFQLTVNVAALIINV) threads the bilayer. The Lumenal portion of the chain corresponds to 877 to 887 (VAAMSSGDVPL). Residues 888–908 (KAVQLLWVNLIMDTLGALALA) form a helical membrane-spanning segment. Residues 909 to 928 (TEPPTDHLMHRTPVGRREPL) are Cytoplasmic-facing. The helical transmembrane segment at 929–951 (ITNIMWRNLLVQSFYQVAVLLVL) threads the bilayer. The Lumenal portion of the chain corresponds to 952 to 963 (NFAGLSILGLNH). A helical transmembrane segment spans residues 964–988 (ENHAHAVEVKNTMIFNAFVMCQIFN). Over 989 to 1006 (EFNARKPDEMNVFRGVNK) the chain is Cytoplasmic. A helical transmembrane segment spans residues 1007 to 1028 (NPLFVAIVGVTFILQIIIVTFL). At 1029–1038 (GKFAHTVRLG) the chain is on the lumenal side. The helical transmembrane segment at 1039–1060 (WQLWLASIIIGLVSWPLAIVGK) threads the bilayer. The Cytoplasmic portion of the chain corresponds to 1061–1086 (LIPVPKTPMSVYFKKPFRKYKASRNA).

It belongs to the cation transport ATPase (P-type) (TC 3.A.3) family. Type IIB subfamily.

It is found in the membrane. The enzyme catalyses Ca(2+)(in) + ATP + H2O = Ca(2+)(out) + ADP + phosphate + H(+). Activated by calmodulin. Functionally, this magnesium-dependent enzyme catalyzes the hydrolysis of ATP coupled with the translocation of calcium from the cytosol out of the cell or into organelles. This chain is Calcium-transporting ATPase 9, plasma membrane-type (ACA9), found in Arabidopsis thaliana (Mouse-ear cress).